Here is a 174-residue protein sequence, read N- to C-terminus: Methylated-DNA--protein-cysteine methyltransferase (174 aa).

The Nucleophile; methyl group acceptor role is filled by Cys144.

This sequence belongs to the MGMT family.

The protein resides in the cytoplasm. The catalysed reaction is a 6-O-methyl-2'-deoxyguanosine in DNA + L-cysteinyl-[protein] = S-methyl-L-cysteinyl-[protein] + a 2'-deoxyguanosine in DNA. It carries out the reaction a 4-O-methyl-thymidine in DNA + L-cysteinyl-[protein] = a thymidine in DNA + S-methyl-L-cysteinyl-[protein]. In terms of biological role, involved in the cellular defense against the biological effects of O6-methylguanine (O6-MeG) and O4-methylthymine (O4-MeT) in DNA. Repairs the methylated nucleobase in DNA by stoichiometrically transferring the methyl group to a cysteine residue in the enzyme. This is a suicide reaction: the enzyme is irreversibly inactivated. The sequence is that of Methylated-DNA--protein-cysteine methyltransferase from Pyrococcus furiosus (strain ATCC 43587 / DSM 3638 / JCM 8422 / Vc1).